We begin with the raw amino-acid sequence, 621 residues long: DEAD-box ATP-dependent RNA helicase 39 (621 aa).

The Q motif signature appears at 112–140 (ENFQELGLSEEVMGALQELNIEVPTEIQC). One can recognise a Helicase ATP-binding domain in the interval 143 to 330 (IPAVMERKSV…DEEFQGIEHL (188 aa)). 156–163 (SHTGSGKT) contributes to the ATP binding site. The short motif at 270–273 (DEAD) is the DEAD box element. One can recognise a Helicase C-terminal domain in the interval 355 to 505 (KLEALLQVLE…LESLTTDNVR (151 aa)). Positions 497–621 (ESLTTDNVRR…RGKSSSARAS (125 aa)) are disordered. Residues 503-537 (NVRRDAARTHITQEKGRSVKQIREVSKQRNSRDKP) show a composition bias toward basic and acidic residues. The span at 555–572 (KSSSSSFSKPRKASSPPE) shows a compositional bias: low complexity.

The protein belongs to the DEAD box helicase family.

The catalysed reaction is ATP + H2O = ADP + phosphate + H(+). The polypeptide is DEAD-box ATP-dependent RNA helicase 39 (RH39) (Arabidopsis thaliana (Mouse-ear cress)).